Here is an 87-residue protein sequence, read N- to C-terminus: Small ribosomal subunit protein uS19m (87 aa).

This sequence belongs to the universal ribosomal protein uS19 family.

The protein resides in the mitochondrion. The chain is Small ribosomal subunit protein uS19m (mrps19) from Dictyostelium citrinum (Slime mold).